We begin with the raw amino-acid sequence, 193 residues long: Surfactant protein C (193 aa).

Residues 1 to 23 constitute a propeptide that is removed on maturation; the sequence is MDMSSKEVLMESPPDYSAGPRSQ. 2 S-palmitoyl cysteine lipidation sites follow: C28 and C29. A propeptide spanning residues 59 to 193 is cleaved from the precursor; the sequence is HMSQKHTEMV…LCGELPLYYI (135 aa). Positions 94 to 193 constitute a BRICHOS domain; that stretch reads FSIGSTGIVV…LCGELPLYYI (100 aa). C121 and C185 are disulfide-bonded. The interval 147 to 170 is disordered; it reads KPSTPTSKLGQEEGHDTGSESDSS.

The protein resides in the secreted. It is found in the extracellular space. The protein localises to the surface film. Pulmonary surfactant associated proteins promote alveolar stability by lowering the surface tension at the air-liquid interface in the peripheral air spaces. This is Surfactant protein C from Mus musculus (Mouse).